A 668-amino-acid chain; its full sequence is tRNA 5-methylaminomethyl-2-thiouridine biosynthesis bifunctional protein MnmC (668 aa).

The tRNA (mnm(5)s(2)U34)-methyltransferase stretch occupies residues 1–245; sequence MKHYSIQPAN…KREMLCGVME (245 aa). Residues 270 to 668 are FAD-dependent cmnm(5)s(2)U34 oxidoreductase; that stretch reads IGGGIASALL…LLKGKAVKAG (399 aa).

In the N-terminal section; belongs to the methyltransferase superfamily. tRNA (mnm(5)s(2)U34)-methyltransferase family. This sequence in the C-terminal section; belongs to the DAO family. The cofactor is FAD.

Its subcellular location is the cytoplasm. The catalysed reaction is 5-aminomethyl-2-thiouridine(34) in tRNA + S-adenosyl-L-methionine = 5-methylaminomethyl-2-thiouridine(34) in tRNA + S-adenosyl-L-homocysteine + H(+). Catalyzes the last two steps in the biosynthesis of 5-methylaminomethyl-2-thiouridine (mnm(5)s(2)U) at the wobble position (U34) in tRNA. Catalyzes the FAD-dependent demodification of cmnm(5)s(2)U34 to nm(5)s(2)U34, followed by the transfer of a methyl group from S-adenosyl-L-methionine to nm(5)s(2)U34, to form mnm(5)s(2)U34. This is tRNA 5-methylaminomethyl-2-thiouridine biosynthesis bifunctional protein MnmC from Shigella flexneri serotype 5b (strain 8401).